We begin with the raw amino-acid sequence, 270 residues long: Energy-coupling factor transporter ATP-binding protein EcfA (270 aa).

The ABC transporter domain occupies 5 to 238 (VEIENLTFFY…QLLEQNGLKA (234 aa)). 38–45 (GHNGAGKS) contacts ATP.

It belongs to the ABC transporter superfamily. Energy-coupling factor EcfA family. Forms a stable energy-coupling factor (ECF) transporter complex composed of 2 membrane-embedded substrate-binding proteins (S component), 2 ATP-binding proteins (A component) and 2 transmembrane proteins (T component).

The protein resides in the cell membrane. Functionally, ATP-binding (A) component of a common energy-coupling factor (ECF) ABC-transporter complex. Unlike classic ABC transporters this ECF transporter provides the energy necessary to transport a number of different substrates. The chain is Energy-coupling factor transporter ATP-binding protein EcfA from Carboxydothermus hydrogenoformans (strain ATCC BAA-161 / DSM 6008 / Z-2901).